The chain runs to 1138 residues: Solute carrier family 12 member 5 (1138 aa).

Disordered regions lie at residues 1-62 and 96-116; these read MSRR…KGRE and QGSREHEEAENNEGGKKKPVQ. At 1–98 the chain is on the cytoplasmic side; sequence MSRRFTVTSL…ANYTNLPQGS (98 aa). Over residues 21–45 the composition is skewed to basic and acidic residues; the sequence is PESRRHSVADPRRLPREDVKGDGNP. A compositionally biased stretch (polar residues) spans 46 to 55; the sequence is KESSPFINST. A Phosphothreonine modification is found at threonine 57. The span at 98-111 shows a compositional bias: basic and acidic residues; sequence SREHEEAENNEGGK. Residues 99-120 form a discontinuously helical membrane-spanning segment; it reads REHEEAENNEGGKKKPVQAPRM. Residue lysine 113 coordinates K(+). The Extracellular portion of the chain corresponds to 121–129; the sequence is GTFMGVYLP. The chain crosses the membrane as a helical span at residues 130 to 151; that stretch reads CLQNIFGVILFLRLTWVVGIAG. Over 152–174 the chain is Cytoplasmic; sequence IMESFCMVFICCSCTMLTAISMS. Residues 175 to 203 form a helical membrane-spanning segment; that stretch reads AIATNGVVPAGGSYYMISRSLGPEFGGAV. Alanine 184 lines the chloride pocket. Topologically, residues 204 to 229 are extracellular; it reads GLCFYLGTTFAGAMYILGTIEILLAY. The next 2 helical transmembrane spans lie at 230–250 and 251–276; these read LFPAMAIFKAEDASGEAAAML and NNMRVYGTCVLTCMATVVFVGVKYVN. Topologically, residues 277 to 402 are extracellular; it reads KFALVFLGCV…ERRGMPSVGL (126 aa). A disulfide bond links cysteine 310 and cysteine 325. Asparagine 314, asparagine 333, asparagine 351, and asparagine 362 each carry an N-linked (GlcNAc...) asparagine glycan. A disulfide bridge connects residues cysteine 345 and cysteine 354. Residues 403–420 form a helical membrane-spanning segment; sequence ADGTPVDMDHPYVFSDMT. Methionine 410 provides a ligand contact to K(+). Chloride contacts are provided by tyrosine 414 and valine 415. Residues 421-429 lie on the Cytoplasmic side of the membrane; sequence SYFTLLVGI. Residues 430–453 form a helical membrane-spanning segment; it reads YFPSVTGIMAGSNRSGDLRDAQKS. Aspartate 446 is a K(+) binding site. Residues 454 to 485 lie on the Extracellular side of the membrane; the sequence is IPTGTILAIATTSAVYISSVVLFGACIEGVVL. The chain crosses the membrane as a helical span at residues 486 to 513; sequence RDKFGEAVNGNLVVGTLAWPSPWVIVIG. Residues 514-534 lie on the Cytoplasmic side of the membrane; sequence SFFSTCGAGLQSLTGAPRLLQ. A run of 2 helical transmembrane segments spans residues 535 to 555 and 556 to 578; these read AISRDGIVPFLQVFGHGKANG and EPTWALLLTACICEIGILIASLD. Glutamate 569 lines the chloride pocket. Residues 579–592 are Cytoplasmic-facing; it reads EVAPILSMFFLMCY. 2 helical membrane passes run 593–615 and 616–632; these read MFVNLACAVQTLLRTPNWRPRFR and YYHWTLSFLGMSLCLAL. Topologically, residues 633 to 1138 are cytoplasmic; sequence MFICSWYYAL…GGREVITIYS (506 aa). Positions 667-681 are scissor helix; that stretch reads GIRGLSLSAARYALL. Threonine 929 is modified (phosphothreonine; by OXSR1 and STK39). The segment at 943-1051 is disordered; sequence HLTKNERERE…GPSPVSSEGI (109 aa). Over residues 945–962 the composition is skewed to basic and acidic residues; sequence TKNEREREIQSITDESRG. A compositionally biased stretch (acidic residues) spans 982-994; it reads TACDNEEKPEEEV. Over residues 1001–1012 the composition is skewed to low complexity; that stretch reads SAPSCPSSSPSP. The segment covering 1019–1041 has biased composition (basic and acidic residues); the sequence is ERETDPEVHLTWTKDKSVAEKNK. At threonine 1029 the chain carries Phosphothreonine; by OXSR1 and STK39. 3 positions are modified to phosphoserine: serine 1044, serine 1047, and serine 1048.

This sequence belongs to the SLC12A transporter family. K/Cl co-transporter subfamily. As to quaternary structure, homodimer; adopts a domain-swap conformation at the scissor helices connecting the transmembrane domain and C-terminal domain. Heterodimer with K-Cl cotransporters SLC12A6 and SLC12A7. Interacts with AP2A1. Post-translationally, phosphorylated at Thr-929 and Thr-1029 by OXSR1/OSR1 and STK39/SPAK downstream of WNK kinases (WNK1, WNK2, WNK3 or WNK4), inhibiting the potassium-chloride cotransport activity. Expressed in brainstem, spinal cord and olfactory bulb of 17 dpc embryos. Expressed in all parts of the brain and spinal cord in postnatal day 14 mice. As to expression, expressed in brainstem and spinal cord of 17 dpc embryos. Expressed in all parts of the brain and spinal cord in postnatal day 14 mice.

It localises to the cell membrane. The protein localises to the cell projection. Its subcellular location is the dendrite. The enzyme catalyses K(+)(in) + chloride(in) = K(+)(out) + chloride(out). Inhibited following phosphorylation by OXSR1/OSR1 and STK39/SPAK: phosphorylation takes place downstream of WNK kinases (WNK1, WNK2, WNK3 or WNK4) in response to hyperosmotic stress and subsequent cell shrinkage. In terms of biological role, mediates electroneutral potassium-chloride cotransport in mature neurons and is required for neuronal Cl(-) homeostasis. As major extruder of intracellular chloride, it establishes the low neuronal Cl(-) levels required for chloride influx after binding of GABA-A and glycine to their receptors, with subsequent hyperpolarization and neuronal inhibition. Involved in the regulation of dendritic spine formation and maturation. This Mus musculus (Mouse) protein is Solute carrier family 12 member 5 (Slc12a5).